A 115-amino-acid chain; its full sequence is Large ribosomal subunit protein bL19 (115 aa).

It belongs to the bacterial ribosomal protein bL19 family.

This protein is located at the 30S-50S ribosomal subunit interface and may play a role in the structure and function of the aminoacyl-tRNA binding site. This is Large ribosomal subunit protein bL19 from Finegoldia magna (strain ATCC 29328 / DSM 20472 / WAL 2508) (Peptostreptococcus magnus).